A 249-amino-acid polypeptide reads, in one-letter code: uncharacterized protein (249 aa).

Its subcellular location is the cytoplasm. The protein resides in the nucleus. This is an uncharacterized protein from Schizosaccharomyces pombe (strain 972 / ATCC 24843) (Fission yeast).